A 142-amino-acid chain; its full sequence is Large ribosomal subunit protein uL13 (142 aa).

It belongs to the universal ribosomal protein uL13 family. In terms of assembly, part of the 50S ribosomal subunit.

This protein is one of the early assembly proteins of the 50S ribosomal subunit, although it is not seen to bind rRNA by itself. It is important during the early stages of 50S assembly. This chain is Large ribosomal subunit protein uL13, found in Dictyoglomus thermophilum (strain ATCC 35947 / DSM 3960 / H-6-12).